The following is a 244-amino-acid chain: Glucosamine-6-phosphate deaminase (244 aa).

Residue D67 is the Proton acceptor; for enolization step of the active site. The active-site For ring-opening step is N136. The active-site Proton acceptor; for ring-opening step is H138. E143 (for ring-opening step) is an active-site residue.

It belongs to the glucosamine/galactosamine-6-phosphate isomerase family. NagB subfamily.

The catalysed reaction is alpha-D-glucosamine 6-phosphate + H2O = beta-D-fructose 6-phosphate + NH4(+). Its pathway is amino-sugar metabolism; N-acetylneuraminate degradation; D-fructose 6-phosphate from N-acetylneuraminate: step 5/5. In terms of biological role, catalyzes the reversible isomerization-deamination of glucosamine 6-phosphate (GlcN6P) to form fructose 6-phosphate (Fru6P) and ammonium ion. In Clostridium botulinum (strain ATCC 19397 / Type A), this protein is Glucosamine-6-phosphate deaminase.